The primary structure comprises 526 residues: Delayed-rectifier potassium channel regulatory subunit KCNS1 (526 aa).

Residues 1–217 (MLMLLVRGTH…LTMENPGYSL (217 aa)) are Cytoplasmic-facing. The helical transmembrane segment at 218-239 (PSKLFSCVSISVVLASIAAMCI) threads the bilayer. Residues 240 to 270 (HSLPEYQAREAAAAVAAVAAGRSPEGVRDDP) are Extracellular-facing. Residues 271–293 (VLRRLEYFCIAWFSFEVSSRLLL) traverse the membrane as a helical segment. Residues 294–304 (APSTRNFFCHP) are Cytoplasmic-facing. A helical transmembrane segment spans residues 305–322 (LNLIDIVSVLPFYLTLLA). The Extracellular segment spans residues 323–337 (GVALGDQGGKEFGHL). The helical; Voltage-sensor transmembrane segment at 338–358 (GKVVQVFRLMRIFRVLKLARH) threads the bilayer. Residues 359 to 373 (STGLRSLGATLKHSY) are Cytoplasmic-facing. Residues 374 to 395 (REVGILLLYLAVGVSVFSGVAY) form a helical membrane-spanning segment. Topologically, residues 396 to 408 (TAEKEEDVGFNTI) are extracellular. The segment at residues 409-420 (PACWWWGTVSMT) is an intramembrane region (helical). Positions 421 to 426 (TVGYGD) match the Selectivity filter motif. The stretch at 421–428 (TVGYGDVV) is an intramembrane region. The Extracellular portion of the chain corresponds to 429–435 (PVTVAGK). Residues 436-464 (LAASGCILGGILVVALPITIIFNKFSHFY) form a helical membrane-spanning segment. The Cytoplasmic portion of the chain corresponds to 465–526 (RRQKALEAAV…PSEPPHPQMY (62 aa)). The interval 491–526 (GVSEASLETSRETSQEGRSADLESQAPSEPPHPQMY) is disordered. The segment covering 499-511 (TSRETSQEGRSAD) has biased composition (basic and acidic residues).

It belongs to the potassium channel family. S (TC 1.A.1.2) subfamily. Kv9.1/KCNS1 sub-subfamily. Heterotetramer with KCNB1. Heterotetramer with KCNB2. Does not form homomultimers.

The protein localises to the cell membrane. Its function is as follows. Potassium channel regulatory subunit that modulate the delayed rectifier voltage-gated potassium channel activity of KCNB1 and KCNB2 by altering their kinetics, expression levels, and shifting the half-inactivation potential to more polarized values. While it does not form functional channels on its own, it can form functional heterotetrameric channels with KCNB1 and KCNB2. Each regulatory subunit has unique regulatory properties that can lead to extensive inhibition, significant changes in kinetics, and/or substantial shifts in the voltage dependencies of the inactivation process. The sequence is that of Delayed-rectifier potassium channel regulatory subunit KCNS1 from Pan troglodytes (Chimpanzee).